We begin with the raw amino-acid sequence, 61 residues long: Translational regulator CsrA (61 aa).

This sequence belongs to the CsrA/RsmA family. In terms of assembly, homodimer; the beta-strands of each monomer intercalate to form a hydrophobic core, while the alpha-helices form wings that extend away from the core.

Its subcellular location is the cytoplasm. Its function is as follows. A key translational regulator that binds mRNA to regulate translation initiation and/or mRNA stability. Mediates global changes in gene expression, shifting from rapid growth to stress survival by linking envelope stress, the stringent response and the catabolite repression systems. Usually binds in the 5'-UTR; binding at or near the Shine-Dalgarno sequence prevents ribosome-binding, repressing translation, binding elsewhere in the 5'-UTR can activate translation and/or stabilize the mRNA. Its function is antagonized by small RNA(s). This chain is Translational regulator CsrA, found in Mannheimia succiniciproducens (strain KCTC 0769BP / MBEL55E).